Reading from the N-terminus, the 212-residue chain is MSPQIIELLIFAIIAFYIINKLITTLGSTSEEEQIKNKSYFGEPVIKDVTYSTVKDHKKVERNVSRTQDIKVFKDIIVENNINAVVDGIEQIHKRLYSFDPVKFINNAKTAFQMIIEAAYKKDVKELSELIDKRYLEEFEKIIPSYGDFFDSSALSAKYSEIYMFGNNIFIKLLFQGKNVVDKIEDLQEEWTFTRNANTKEVDWFLSNIERV.

This is an uncharacterized protein from Rickettsia prowazekii (strain Madrid E).